A 161-amino-acid polypeptide reads, in one-letter code: 6,7-dimethyl-8-ribityllumazine synthase (161 aa).

5-amino-6-(D-ribitylamino)uracil is bound by residues tryptophan 31, 63 to 65 (SFE), and 85 to 87 (VVI). 90–91 (GT) serves as a coordination point for (2S)-2-hydroxy-3-oxobutyl phosphate. Residue histidine 93 is the Proton donor of the active site. Residue phenylalanine 118 participates in 5-amino-6-(D-ribitylamino)uracil binding. A (2S)-2-hydroxy-3-oxobutyl phosphate-binding site is contributed by arginine 132.

The protein belongs to the DMRL synthase family.

It catalyses the reaction (2S)-2-hydroxy-3-oxobutyl phosphate + 5-amino-6-(D-ribitylamino)uracil = 6,7-dimethyl-8-(1-D-ribityl)lumazine + phosphate + 2 H2O + H(+). It participates in cofactor biosynthesis; riboflavin biosynthesis; riboflavin from 2-hydroxy-3-oxobutyl phosphate and 5-amino-6-(D-ribitylamino)uracil: step 1/2. In terms of biological role, catalyzes the formation of 6,7-dimethyl-8-ribityllumazine by condensation of 5-amino-6-(D-ribitylamino)uracil with 3,4-dihydroxy-2-butanone 4-phosphate. This is the penultimate step in the biosynthesis of riboflavin. This is 6,7-dimethyl-8-ribityllumazine synthase from Arthrobacter sp. (strain FB24).